A 155-amino-acid chain; its full sequence is Mediator of RNA polymerase II transcription subunit 10 (155 aa).

Residues 54 to 80 (SSHTQSHAPDADTAQANPSDPPISTIE) are disordered.

Belongs to the Mediator complex subunit 10 family. Component of the Mediator complex.

The protein localises to the nucleus. In terms of biological role, component of the Mediator complex, a coactivator involved in the regulated transcription of nearly all RNA polymerase II-dependent genes. Mediator functions as a bridge to convey information from gene-specific regulatory proteins to the basal RNA polymerase II transcription machinery. Mediator is recruited to promoters by direct interactions with regulatory proteins and serves as a scaffold for the assembly of a functional preinitiation complex with RNA polymerase II and the general transcription factors. This Aspergillus terreus (strain NIH 2624 / FGSC A1156) protein is Mediator of RNA polymerase II transcription subunit 10 (nut2).